The primary structure comprises 519 residues: Cytosol aminopeptidase (519 aa).

S42 bears the Phosphoserine mark. K45 carries the N6-succinyllysine modification. At S54 the chain carries Phosphoserine. Residues K61 and K103 each carry the N6-succinyllysine modification. Residues S180 and S194 each carry the phosphoserine modification. L202, M203, and T205 together coordinate Zn(2+). S238 carries the post-translational modification Phosphoserine. Positions 282 and 287 each coordinate Zn(2+). Substrate is bound by residues K282, D287, S292, and K294. Position 287 (D287) interacts with Mg(2+). Residue K294 is part of the active site. Zn(2+) contacts are provided by R303, D305, D364, and E366. Substrate-binding residues include D305 and D364. Residues D364 and E366 each coordinate Mg(2+). The active site involves R368. K455 bears the N6-acetyllysine; alternate mark. K455 bears the N6-succinyllysine; alternate mark. The residue at position 476 (K476) is an N6-succinyllysine. Position 489 is an N6-acetyllysine; alternate (K489). K489 carries the N6-succinyllysine; alternate modification.

The protein belongs to the peptidase M17 family. Homohexamer. It depends on Zn(2+) as a cofactor. Mn(2+) is required as a cofactor.

It is found in the cytoplasm. It carries out the reaction Release of an N-terminal amino acid, Xaa-|-Yaa-, in which Xaa is preferably Leu, but may be other amino acids including Pro although not Arg or Lys, and Yaa may be Pro. Amino acid amides and methyl esters are also readily hydrolyzed, but rates on arylamides are exceedingly low.. The enzyme catalyses an S-substituted L-cysteinylglycine + H2O = an S-substituted L-cysteine + glycine. It catalyses the reaction L-cysteinylglycine + H2O = L-cysteine + glycine. The catalysed reaction is S-benzyl-L-cysteinylglycine + H2O = S-benzyl-L-cysteine + glycine. It carries out the reaction Release of N-terminal proline from a peptide.. With respect to regulation, zofenoprilat inhibits Cys-Gly hydrolysis activity. Its function is as follows. Cytosolic metallopeptidase that catalyzes the removal of unsubstituted N-terminal hydrophobic amino acids from various peptides. The presence of Zn(2+) ions is essential for the peptidase activity, and the association with other cofactors can modulate the substrate spectificity of the enzyme. For instance, in the presence of Mn(2+), it displays a specific Cys-Gly hydrolyzing activity of Cys-Gly-S-conjugates. Involved in the metabolism of glutathione and in the degradation of glutathione S-conjugates, which may play a role in the control of the cell redox status. The polypeptide is Cytosol aminopeptidase (Bos taurus (Bovine)).